A 524-amino-acid chain; its full sequence is Tyrosine-protein kinase HCK (524 aa).

Positions 1–72 are disordered; sequence MGGRSSCEDP…NNSNSMPPGF (72 aa). Glycine 2 carries the N-myristoyl glycine lipid modification. Glycine 3 carries the S-palmitoyl cysteine lipid modification. The span at 29–38 shows a compositional bias: basic and acidic residues; sequence FLRDGSKASK. Residue tyrosine 50 is modified to Phosphotyrosine; by autocatalysis. Positions 54 to 68 are enriched in polar residues; sequence PTSSSKLGPNNSNSM. The region spanning 76–136 is the SH3 domain; that stretch reads SEDTIVVALY…PSNYVARVNS (61 aa). Positions 142 to 239 constitute an SH2 domain; it reads WFFKGISRKD…GLCQKLSVPC (98 aa). Residue threonine 200 is modified to Phosphothreonine. The residue at position 207 (tyrosine 207) is a Phosphotyrosine. Residues 260–513 form the Protein kinase domain; that stretch reads LQMEKKLGAG…YIQSVLDDFY (254 aa). ATP-binding positions include 266 to 274 and lysine 288; that span reads LGAGQFGEV. The Proton acceptor role is filled by aspartate 379. Tyrosine 409 is modified (phosphotyrosine; by autocatalysis). The residue at position 460 (serine 460) is a Phosphoserine. Tyrosine 520 bears the Phosphotyrosine mark.

Belongs to the protein kinase superfamily. Tyr protein kinase family. SRC subfamily. In terms of assembly, interacts with ADAM15. Interacts with FASLG. Interacts with ARRB1 and ARRB2. Interacts with FCGR1A; the interaction may be indirect. Interacts with IL6ST. Interacts (via SH3 domain) with ELMO1. Interacts (via SH3 domain) with TP73. Interacts with YAP1. Interacts with ABL1 and ITGB1, and thereby recruits ABL1 to activated ITGB1. Interacts (via SH2 domain) with FLT3 (tyrosine phosphorylated). Interacts with CBL. Interacts with VAV1, WAS and RAPGEF1. Interacts (via SH3 domain) with WDCP. In terms of processing, phosphorylated on several tyrosine residues. Autophosphorylated. Becomes rapidly phosphorylated upon activation of the immunoglobulin receptors FCGR1A and FCGR2A. Phosphorylation at Tyr-409 increases kinase activity. Phosphorylation at Tyr-520 inhibits kinase activity. Kinase activity is not required for phosphorylation at Tyr-520, suggesting that this site may be a target of other kinases. Post-translationally, ubiquitinated by CBL, leading to its degradation via the proteasome. Isoform 2 palmitoylation at position 2 requires prior myristoylation. Palmitoylation at position 3 is required for caveolar localization of isoform 2. In terms of tissue distribution, expressed predominantly in cells of the myeloid and B-lymphoid lineages.

The protein localises to the cytoplasmic vesicle. The protein resides in the secretory vesicle. It localises to the cytoplasm. Its subcellular location is the cytosol. It is found in the membrane. The protein localises to the caveola. The protein resides in the lysosome. It localises to the cell projection. Its subcellular location is the podosome membrane. It is found in the cell membrane. The protein localises to the cell junction. The protein resides in the focal adhesion. It localises to the cytoskeleton. Its subcellular location is the golgi apparatus. It is found in the nucleus. It catalyses the reaction L-tyrosyl-[protein] + ATP = O-phospho-L-tyrosyl-[protein] + ADP + H(+). Subject to autoinhibition, mediated by intramolecular interactions involving the SH2 and SH3 domains. Kinase activity is also regulated by phosphorylation at regulatory tyrosine residues. Phosphorylation at Tyr-409 is required for optimal activity. Phosphorylation at Tyr-520 inhibits kinase activity. Inhibited by PP1. Functionally, non-receptor tyrosine-protein kinase found in hematopoietic cells that transmits signals from cell surface receptors and plays an important role in the regulation of innate immune responses, including neutrophil, monocyte, macrophage and mast cell functions, phagocytosis, cell survival and proliferation, cell adhesion and migration. Acts downstream of receptors that bind the Fc region of immunoglobulins, such as FCGR1A and FCGR2A, but also CSF3R, PLAUR, the receptors for IFNG, IL2, IL6 and IL8, and integrins, such as ITGB1 and ITGB2. During the phagocytic process, mediates mobilization of secretory lysosomes, degranulation, and activation of NADPH oxidase to bring about the respiratory burst. Plays a role in the release of inflammatory molecules. Promotes reorganization of the actin cytoskeleton and actin polymerization, formation of podosomes and cell protrusions. Inhibits TP73-mediated transcription activation and TP73-mediated apoptosis. Phosphorylates CBL in response to activation of immunoglobulin gamma Fc region receptors. Phosphorylates ADAM15, BCR, ELMO1, FCGR2A, GAB1, GAB2, RAPGEF1, STAT5B, TP73, VAV1 and WAS. This Mus musculus (Mouse) protein is Tyrosine-protein kinase HCK (Hck).